The following is a 343-amino-acid chain: Cytoplasmic tRNA 2-thiolation protein 1 (343 aa).

This sequence belongs to the TtcA family. CTU1/NCS6/ATPBD3 subfamily.

It localises to the cytoplasm. It functions in the pathway tRNA modification; 5-methoxycarbonylmethyl-2-thiouridine-tRNA biosynthesis. Its function is as follows. Plays a central role in 2-thiolation of mcm(5)S(2)U at tRNA wobble positions of tRNA(Lys), tRNA(Glu) and tRNA(Gln). Directly binds tRNAs and probably acts by catalyzing adenylation of tRNAs, an intermediate required for 2-thiolation. It is unclear whether it acts as a sulfurtransferase that transfers sulfur from thiocarboxylated URM1 onto the uridine of tRNAs at wobble position. This is Cytoplasmic tRNA 2-thiolation protein 1 from Drosophila mojavensis (Fruit fly).